The primary structure comprises 48 residues: MVKKVALECSECGRRNYSVPARPNHEERLELKKFCKHCGKVTVHRETR.

This sequence belongs to the bacterial ribosomal protein bL33 family.

This is Large ribosomal subunit protein bL33A from Limosilactobacillus fermentum (strain NBRC 3956 / LMG 18251) (Lactobacillus fermentum).